The chain runs to 622 residues: E3 ubiquitin-protein ligase RNF12-A (622 aa).

Disordered regions lie at residues 1–26 (MESA…MDRL), 67–386 (RLQQ…ESER), and 473–514 (NANA…NSRG). Residues 11–21 (SIEQSESQRQS) show a composition bias toward low complexity. Composition is skewed to polar residues over residues 110-138 (SVRQ…NPNS) and 147-163 (INVN…SLDQ). Positions 216–242 (RSPDQRRTRARTDRSRSPLHHAVDPPI) are enriched in basic and acidic residues. A compositionally biased stretch (polar residues) spans 247 to 256 (HSSSQTVDTS). Positions 272 to 289 (SSQVQNSSSSNETEGSSR) are enriched in low complexity. A compositionally biased stretch (polar residues) spans 300 to 317 (VLGTEGQSQSTVHLSNPE). Positions 318–331 (TRSSSQTPQTDSST) are enriched in low complexity. Polar residues predominate over residues 332-341 (NAETTGTGQR). A compositionally biased stretch (basic and acidic residues) spans 355 to 365 (RPGDYRQRDSI). The segment covering 366–382 (ANRTRSRSQTPNNTVTY) has biased composition (polar residues). The RING-type; atypical zinc-finger motif lies at 568–609 (CSVCITEYTEGNKLRKLPCSHEYHIHCIDRWLSENSTCPICR). The PDZ-binding motif lies at 619–622 (ESIV).

This sequence belongs to the RNF12 family. In terms of assembly, forms homodimers through the C-terminal region. The N-terminus interacts with the homeobox of LIM/homeobox factor lhx1/lim1, with lhx3/lim3 and lhx5/lim5, and with the N-terminus of ldb1. Shows overlapping expression with lhx1/lim1 and ldb1 in the gastrula mesoderm, and expression overlaps with ldb1 throughout early embryogenesis. After gastrulation, expression is gradually restricted to tissues originated from the ectoderm, the neuroectoderm, neural crest and epidermis, and subsequently to the neural tube as well as the head and tailbud region.

Its subcellular location is the nucleus. The catalysed reaction is S-ubiquitinyl-[E2 ubiquitin-conjugating enzyme]-L-cysteine + [acceptor protein]-L-lysine = [E2 ubiquitin-conjugating enzyme]-L-cysteine + N(6)-ubiquitinyl-[acceptor protein]-L-lysine.. It participates in protein modification; protein ubiquitination. In terms of biological role, acts as an E3 ubiquitin-protein ligase specific for ldb1, mediating ubiquitination and proteasome-dependent degradation of excess ldb1 in a RING-dependent manner. Does not degrade ldb1 bound to lhx1/lim1, nor lim1 itself and thus contributes to the establishment of proper ldb1-lhx1/lim1 stoichiometry and the formation of a ldb1-lhx1/lim1 complex. Interferes with Spemann organizer function and suppresses secondary axis formation induced by ldb1 and lhx1/lim1. The protein is E3 ubiquitin-protein ligase RNF12-A (rnf12-a) of Xenopus laevis (African clawed frog).